The following is a 672-amino-acid chain: Acetyl-coenzyme A synthetase (672 aa).

Residues 217-220 and T335 contribute to the CoA site; that span reads RRGK. ATP contacts are provided by residues 411-413, 435-440, D529, R544, and R555; these read GEP and DTWWQT. 3 residues coordinate Mg(2+): V566, H568, and I571. R613 lines the CoA pocket. The residue at position 638 (K638) is an N6-acetyllysine.

The protein belongs to the ATP-dependent AMP-binding enzyme family. Mg(2+) is required as a cofactor. Post-translationally, acetylated. Deacetylation by the SIR2-homolog deacetylase activates the enzyme. In terms of processing, the N-terminus is blocked.

The enzyme catalyses acetate + ATP + CoA = acetyl-CoA + AMP + diphosphate. In terms of biological role, catalyzes the conversion of acetate into acetyl-CoA (AcCoA), an essential intermediate at the junction of anabolic and catabolic pathways. AcsA undergoes a two-step reaction. In the first half reaction, AcsA combines acetate with ATP to form acetyl-adenylate (AcAMP) intermediate. In the second half reaction, it can then transfer the acetyl group from AcAMP to the sulfhydryl group of CoA, forming the product AcCoA. The chain is Acetyl-coenzyme A synthetase from Methanothrix soehngenii (Methanosaeta concilii).